Reading from the N-terminus, the 176-residue chain is RNA 2',3'-cyclic phosphodiesterase (176 aa).

His-28 functions as the Proton donor in the catalytic mechanism. Short sequence motifs (HXTX) lie at residues 28–31 (HITL) and 113–116 (HVTL). His-113 serves as the catalytic Proton acceptor.

The protein belongs to the 2H phosphoesterase superfamily. ThpR family.

It catalyses the reaction a 3'-end 2',3'-cyclophospho-ribonucleotide-RNA + H2O = a 3'-end 2'-phospho-ribonucleotide-RNA + H(+). In terms of biological role, hydrolyzes RNA 2',3'-cyclic phosphodiester to an RNA 2'-phosphomonoester. This Aeropyrum pernix (strain ATCC 700893 / DSM 11879 / JCM 9820 / NBRC 100138 / K1) protein is RNA 2',3'-cyclic phosphodiesterase.